We begin with the raw amino-acid sequence, 464 residues long: Na(+)/H(+) antiporter NhaA (464 aa).

12 helical membrane-spanning segments follow: residues 37–57, 82–102, 118–138, 145–165, 176–196, 200–220, 226–246, 248–268, 321–341, 360–380, 396–416, and 430–450; these read GSGI…NTSC, IHYW…GLEI, VLPI…YFSF, VSGW…ILLL, AVLV…IAIF, NLAW…LLLN, ALWA…FSGV, ATVA…YSPT, ILNT…NAGV, VFFG…MICV, VLGI…VSEL, and ITIL…LRFI.

The protein belongs to the NhaA Na(+)/H(+) (TC 2.A.33) antiporter family.

Its subcellular location is the cell inner membrane. The catalysed reaction is Na(+)(in) + 2 H(+)(out) = Na(+)(out) + 2 H(+)(in). Its function is as follows. Na(+)/H(+) antiporter that extrudes sodium in exchange for external protons. This is Na(+)/H(+) antiporter NhaA from Dichelobacter nodosus (strain VCS1703A).